Consider the following 316-residue polypeptide: tRNA dimethylallyltransferase (316 aa).

Residue 17–24 (GPTASGKT) participates in ATP binding. 19–24 (TASGKT) contributes to the substrate binding site. Interaction with substrate tRNA regions lie at residues 42 to 45 (DSAL), 166 to 170 (QRLSR), and 247 to 252 (RCVGYR).

It belongs to the IPP transferase family. As to quaternary structure, monomer. Requires Mg(2+) as cofactor.

It carries out the reaction adenosine(37) in tRNA + dimethylallyl diphosphate = N(6)-dimethylallyladenosine(37) in tRNA + diphosphate. In terms of biological role, catalyzes the transfer of a dimethylallyl group onto the adenine at position 37 in tRNAs that read codons beginning with uridine, leading to the formation of N6-(dimethylallyl)adenosine (i(6)A). In Salmonella newport (strain SL254), this protein is tRNA dimethylallyltransferase.